The chain runs to 94 residues: Small ribosomal subunit protein uS19 (94 aa).

It belongs to the universal ribosomal protein uS19 family.

Its function is as follows. Protein S19 forms a complex with S13 that binds strongly to the 16S ribosomal RNA. The chain is Small ribosomal subunit protein uS19 from Anaplasma phagocytophilum (strain HZ).